The sequence spans 944 residues: Serine/threonine-protein kinase PLK4 (944 aa).

The Protein kinase domain occupies 12–265 (FKVLNLLGKG…LSSVLDHAFM (254 aa)). ATP contacts are provided by residues 18-26 (LGKGSFACV) and Lys-41. Asp-136 functions as the Proton acceptor in the catalytic mechanism. Disordered regions lie at residues 327-396 (KDKH…YSER), 432-463 (RSLE…RSND), and 530-561 (LGIK…QQAF). A compositionally biased stretch (polar residues) spans 378-394 (RSGTSQSQTYAKPSSYS). Over residues 432-447 (RSLERHTSPPVKEKTP) the composition is skewed to basic and acidic residues. The span at 548–561 (FGEQSKSRVPQQAF) shows a compositional bias: polar residues. The 114-residue stretch at 565–678 (TLRSIISPLN…AKFIKLVRSK (114 aa)) folds into the Cryptic POLO box 1 (CPB1) domain. The region spanning 679–791 (TPKVTYYTRY…GRRPALAESP (113 aa)) is the Cryptic POLO box 2 (CPB2) domain. Positions 786-809 (ALAESPKTQPTPSVDSARERKEEQ) are disordered. The 79-residue stretch at 862 to 940 (QVLKSVFVEN…LSSILMLFAS (79 aa)) folds into the POLO box domain.

Belongs to the protein kinase superfamily. Ser/Thr protein kinase family. CDC5/Polo subfamily. Homodimer. Post-translationally, ubiquitinated; leading to its degradation by the proteasome.

The protein resides in the cytoplasm. Its subcellular location is the cytoskeleton. The protein localises to the microtubule organizing center. It is found in the centrosome. It localises to the centriole. It catalyses the reaction L-seryl-[protein] + ATP = O-phospho-L-seryl-[protein] + ADP + H(+). The catalysed reaction is L-threonyl-[protein] + ATP = O-phospho-L-threonyl-[protein] + ADP + H(+). Its function is as follows. Serine/threonine-protein kinase that plays a central role in centriole duplication. Able to trigger procentriole formation on the surface of the parental centriole cylinder, leading to the recruitment of centriole biogenesis proteins such as sass6, cpap, ccp110, cep135 and gamma-tubulin. When overexpressed, it is able to induce centrosome amplification through the simultaneous generation of multiple procentrioles adjoining each parental centriole during S phase. Its central role in centriole replication suggests a possible role in tumorigenesis, centrosome aberrations being frequently observed in tumors. Also involved in deuterosome-mediated centriole amplification in multiciliated that can generate more than 100 centrioles. The polypeptide is Serine/threonine-protein kinase PLK4 (Xenopus laevis (African clawed frog)).